The primary structure comprises 32 residues: Potassium channel toxin alpha-KTx 10.6 (32 aa).

3 disulfide bridges follow: Cys3–Cys22, Cys8–Cys27, and Cys12–Cys29.

In terms of tissue distribution, expressed by the venom gland.

Its subcellular location is the secreted. Blocks human voltage-gated potassium (Kv) channels Kv1.2/KCNA2 and Kv1.3/KCNA3. Does not block human Kv1.1 at 100nM concentration. This is Potassium channel toxin alpha-KTx 10.6 from Centruroides bonito (Scorpion).